Reading from the N-terminus, the 331-residue chain is Vitamin B12 import system permease protein BtuC (331 aa).

7 helical membrane passes run 21–43, 63–85, 90–112, 116–138, 151–173, 193–210, and 239–261; these read LALL…ERWI, PRTL…MQAV, LAEP…TVLL, LLPV…FLLL, LLIG…YFST, WRHG…LWLS, and VLVL…IAFI.

This sequence belongs to the binding-protein-dependent transport system permease family. FecCD subfamily. In terms of assembly, the complex is composed of two ATP-binding proteins (BtuD), two transmembrane proteins (BtuC) and a solute-binding protein (BtuF).

The protein resides in the cell inner membrane. Functionally, part of the ABC transporter complex BtuCDF involved in vitamin B12 import. Involved in the translocation of the substrate across the membrane. The chain is Vitamin B12 import system permease protein BtuC from Pectobacterium atrosepticum (strain SCRI 1043 / ATCC BAA-672) (Erwinia carotovora subsp. atroseptica).